Consider the following 152-residue polypeptide: Xanthine-guanine phosphoribosyltransferase (152 aa).

5-phospho-alpha-D-ribose 1-diphosphate is bound by residues 37–38, R69, and 88–96; these read RG and DDLVDTGGT. Residue R69 participates in GMP binding. D89 is a binding site for Mg(2+). D92 and I135 together coordinate guanine. D92 and I135 together coordinate xanthine. Residues 92-96 and 134-135 each bind GMP; these read DTGGT and WI.

It belongs to the purine/pyrimidine phosphoribosyltransferase family. XGPT subfamily. Homotetramer. It depends on Mg(2+) as a cofactor.

It is found in the cell inner membrane. It carries out the reaction GMP + diphosphate = guanine + 5-phospho-alpha-D-ribose 1-diphosphate. The catalysed reaction is XMP + diphosphate = xanthine + 5-phospho-alpha-D-ribose 1-diphosphate. It catalyses the reaction IMP + diphosphate = hypoxanthine + 5-phospho-alpha-D-ribose 1-diphosphate. It participates in purine metabolism; GMP biosynthesis via salvage pathway; GMP from guanine: step 1/1. The protein operates within purine metabolism; XMP biosynthesis via salvage pathway; XMP from xanthine: step 1/1. Its function is as follows. Purine salvage pathway enzyme that catalyzes the transfer of the ribosyl-5-phosphate group from 5-phospho-alpha-D-ribose 1-diphosphate (PRPP) to the N9 position of the 6-oxopurines guanine and xanthine to form the corresponding ribonucleotides GMP (guanosine 5'-monophosphate) and XMP (xanthosine 5'-monophosphate), with the release of PPi. To a lesser extent, also acts on hypoxanthine. In Pectobacterium atrosepticum (strain SCRI 1043 / ATCC BAA-672) (Erwinia carotovora subsp. atroseptica), this protein is Xanthine-guanine phosphoribosyltransferase.